Here is a 431-residue protein sequence, read N- to C-terminus: tRNA (adenine(37)-N6)-methyltransferase (431 aa).

The region spanning 30–168 is the TsaA-like domain; it reads TEPIGYLESC…YIADYDSPQN (139 aa). S-adenosyl-L-methionine is bound by residues 47 to 49, 90 to 91, Arg-117, Leu-127, and 148 to 151; these read PRQ, HK, and IDGT. Residues 196 to 242 are disordered; sequence LSGRGKVQPRQSTKERPKCLEDRTSGENSQKSRDMSEIQHTLPEDRE. The span at 207–242 shows a compositional bias: basic and acidic residues; it reads STKERPKCLEDRTSGENSQKSRDMSEIQHTLPEDRE.

It belongs to the tRNA methyltransferase O family.

It catalyses the reaction N(6)-L-threonylcarbamoyladenosine(37) in tRNA + S-adenosyl-L-methionine = N(6)-methyl,N(6)-L-threonylcarbamoyladenosine(37) in tRNA + S-adenosyl-L-homocysteine + H(+). S-adenosyl-L-methionine-dependent methyltransferase responsible for the addition of the methyl group in the formation of N6-methyl-N6-threonylcarbamoyladenosine at position 37 (m(6)t(6)A37) of the tRNA anticodon loop of tRNA(Ser)(GCU). The methyl group of m(6)t(6)A37 may improve the efficiency of the tRNA decoding ability. May bind to tRNA. This is tRNA (adenine(37)-N6)-methyltransferase from Mus musculus (Mouse).